The following is a 77-amino-acid chain: Antitoxin VapB2 (77 aa).

Residues 4 to 46 (ASVFMTNRSQAVRLPAEVRFSEEIKKLSVRVSGSDRILSPLNQ) form the SpoVT-AbrB domain.

This sequence belongs to the VapB family. Probably forms a complex with cognate toxin VapC2.

Antitoxin component of a type II toxin-antitoxin (TA) system. Neutralizes the effect of cognate toxin VapC2 but not non-cognate toxin VapC2. This Haemophilus influenzae (strain 86-028NP) protein is Antitoxin VapB2.